A 650-amino-acid polypeptide reads, in one-letter code: Hemocyanin subunit 2 (650 aa).

O-linked (GalNAc...) serine glycans are attached at residues Ser120 and Ser172. Residues His193, His197, and His225 each coordinate Cu cation. N-linked (GlcNAc...) asparagine glycosylation is present at Asn309. Residues His344, His348, and His384 each contribute to the Cu cation site.

It belongs to the tyrosinase family. Hemocyanin subfamily. As to quaternary structure, hexamer of a number of different chains, of which five have been identified. Contains one N-glycosylated and three O-glycosylated residues. The position of one of the O-glycosylated residues has not been determined. In terms of processing, O-linked glycan at Ser-120 may be composed of two GalNAc, three Gal, and two N-acetylneuraminic acid units for a total 1525-Da MW. Hemolymph.

It localises to the secreted. Its subcellular location is the extracellular space. Functionally, hemocyanins are copper-containing oxygen carriers occurring freely dissolved in the hemolymph of many mollusks and arthropods. The sequence is that of Hemocyanin subunit 2 from Carcinus aestuarii (Green crab).